Here is a 351-residue protein sequence, read N- to C-terminus: Autoinducer 2 import system permease protein LsrC (351 aa).

Transmembrane regions (helical) follow at residues 14 to 34 (LLAI…YFSL), 39 to 59 (MIFS…LVML), 70 to 90 (ITGL…GLAA), 93 to 113 (LFAL…VTWL), 115 to 135 (IPAI…MLLL), 155 to 175 (ILFS…AMAW), 213 to 233 (MNGV…GFIP), 252 to 272 (GISL…AFLL), and 284 to 304 (LPAW…LVFD).

It belongs to the binding-protein-dependent transport system permease family. AraH/RbsC subfamily. The complex is composed of two ATP-binding proteins (LsrA), two transmembrane proteins (LsrC and LsrD) and a solute-binding protein (LsrB).

It localises to the cell inner membrane. Part of the ABC transporter complex LsrABCD involved in autoinducer 2 (AI-2) import. Probably responsible for the translocation of the substrate across the membrane. This chain is Autoinducer 2 import system permease protein LsrC (lsrC), found in Yersinia pestis bv. Antiqua (strain Antiqua).